The primary structure comprises 128 residues: Sulfurtransferase TusD (128 aa).

C78 (cysteine persulfide intermediate) is an active-site residue.

It belongs to the DsrE/TusD family. Heterohexamer, formed by a dimer of trimers. The hexameric TusBCD complex contains 2 copies each of TusB, TusC and TusD. The TusBCD complex interacts with TusE.

It localises to the cytoplasm. Functionally, part of a sulfur-relay system required for 2-thiolation of 5-methylaminomethyl-2-thiouridine (mnm(5)s(2)U) at tRNA wobble positions. Accepts sulfur from TusA and transfers it in turn to TusE. This chain is Sulfurtransferase TusD, found in Erwinia tasmaniensis (strain DSM 17950 / CFBP 7177 / CIP 109463 / NCPPB 4357 / Et1/99).